A 306-amino-acid polypeptide reads, in one-letter code: MGNLVIGSRGSELALWQANHIKERLKKECLIESEIQIVKTKGDKILDTPLNKIGGKGLFTKELEELLLKGTIDLAVHSLKDVPVVFEKGLDLACITKRADVRDTFLSVKFPDLMSLPKGAKVGTTSLRRSMQLKLKRQDLDTESLRGNVQTRLKKLECGEFDAIILAEAGLCRLEIQGAKYRKAFSVKEMIPSMGQGALGVEMLKNHKHFATLQKLNDEKSAFCCRLEREFIKGLNGGCQIPIGVHASLMGDRVKIQAVLGLPNGKEVITKEKRGDKTKAFDLVQELLEEFLQSGAKEILEKAQLF.

At cysteine 239 the chain carries S-(dipyrrolylmethanemethyl)cysteine.

The protein belongs to the HMBS family. In terms of assembly, monomer. Dipyrromethane serves as cofactor.

It catalyses the reaction 4 porphobilinogen + H2O = hydroxymethylbilane + 4 NH4(+). Its pathway is porphyrin-containing compound metabolism; protoporphyrin-IX biosynthesis; coproporphyrinogen-III from 5-aminolevulinate: step 2/4. In terms of biological role, tetrapolymerization of the monopyrrole PBG into the hydroxymethylbilane pre-uroporphyrinogen in several discrete steps. In Helicobacter pylori (strain P12), this protein is Porphobilinogen deaminase.